We begin with the raw amino-acid sequence, 443 residues long: Maintenance of mitochondrial morphology protein 1 (443 aa).

The Lumenal portion of the chain corresponds to Met1–Gly80. A helical membrane pass occupies residues Leu81–Phe101. The Cytoplasmic segment spans residues Ala102–Asn443. 2 disordered regions span residues Lys126–Ser146 and Leu304–Thr358. Positions Ser131–Glu142 are enriched in acidic residues. Positions Ser165–Pro417 constitute an SMP-LTD domain.

This sequence belongs to the MMM1 family. Homodimer. Component of the ER-mitochondria encounter structure (ERMES) or MDM complex, composed of MMM1, MDM10, MDM12 and MDM34. An MMM1 homodimer associates with one molecule of MDM12 on each side in a pairwise head-to-tail manner, and the SMP-LTD domains of MMM1 and MDM12 generate a continuous hydrophobic tunnel for phospholipid trafficking.

The protein resides in the endoplasmic reticulum membrane. Component of the ERMES/MDM complex, which serves as a molecular tether to connect the endoplasmic reticulum (ER) and mitochondria. Components of this complex are involved in the control of mitochondrial shape and protein biogenesis, and function in nonvesicular lipid trafficking between the ER and mitochondria. The MDM12-MMM1 subcomplex functions in the major beta-barrel assembly pathway that is responsible for biogenesis of all outer membrane beta-barrel proteins, and acts in a late step after the SAM complex. The MDM10-MDM12-MMM1 subcomplex further acts in the TOM40-specific pathway after the action of the MDM12-MMM1 complex. Essential for establishing and maintaining the structure of mitochondria and maintenance of mtDNA nucleoids. The polypeptide is Maintenance of mitochondrial morphology protein 1 (Scheffersomyces stipitis (strain ATCC 58785 / CBS 6054 / NBRC 10063 / NRRL Y-11545) (Yeast)).